We begin with the raw amino-acid sequence, 192 residues long: Large ribosomal subunit protein uL3 (192 aa).

This sequence belongs to the universal ribosomal protein uL3 family. In terms of assembly, part of the 50S ribosomal subunit. Forms a cluster with proteins L14 and L19.

Functionally, one of the primary rRNA binding proteins, it binds directly near the 3'-end of the 23S rRNA, where it nucleates assembly of the 50S subunit. The chain is Large ribosomal subunit protein uL3 (rplC) from Wolinella succinogenes (strain ATCC 29543 / DSM 1740 / CCUG 13145 / JCM 31913 / LMG 7466 / NCTC 11488 / FDC 602W) (Vibrio succinogenes).